A 409-amino-acid chain; its full sequence is Protein naked cuticle homolog 2-like (409 aa).

A lipid anchor (N-myristoyl glycine) is attached at glycine 2. One can recognise an EF-hand domain in the interval 109–144 (AEDNRQEWVFTLYDFDNSGKVTKEDMSSLMHTIYDV). Ca(2+) is bound by residues aspartate 122, aspartate 124, serine 126, lysine 128, and aspartate 133. Disordered regions lie at residues 166-224 (VTPE…YCVD), 243-315 (TSRF…RFPG), 346-367 (NHTH…IRSR), and 388-409 (RHEH…YHQT). Basic and acidic residues-rich tracts occupy residues 171 to 185 (AARR…RETS) and 193 to 224 (VRSE…YCVD). The segment covering 247–268 (DSSSPDADQDPPSRSSHSQSRP) has biased composition (low complexity). Residues 389–409 (HEHHHHHEHHHHHHYHHYHQT) show a composition bias toward basic residues.

The protein belongs to the NKD family.

It localises to the cell membrane. It is found in the cytoplasm. In terms of biological role, cell autonomous antagonist of both the canonical and non-canonical Wnt signaling pathways. The sequence is that of Protein naked cuticle homolog 2-like (nkd2l) from Danio rerio (Zebrafish).